Here is a 238-residue protein sequence, read N- to C-terminus: Probable transcriptional regulatory protein HH_1604 (238 aa).

This sequence belongs to the TACO1 family.

The protein localises to the cytoplasm. In Helicobacter hepaticus (strain ATCC 51449 / 3B1), this protein is Probable transcriptional regulatory protein HH_1604.